The chain runs to 1523 residues: ATP-binding cassette sub-family C member 3 (1523 aa).

The Extracellular portion of the chain corresponds to 1-35; sequence MDRLCGSGELGSKFWDSNLSIYTNTPDLTPCFQNS. A glycan (N-linked (GlcNAc...) asparagine) is linked at Asn-18. A helical membrane pass occupies residues 36–56; it reads LLAWVPCIYLWAALPCYLFYL. Residues 57 to 75 lie on the Cytoplasmic side of the membrane; it reads RHHQLGYIVLSWLSRLKTA. A helical membrane pass occupies residues 76–96; the sequence is LGVLLWCVSWVDLFYSFHGLI. Topologically, residues 97–102 are extracellular; it reads HGSSPA. The chain crosses the membrane as a helical span at residues 103–123; the sequence is PVFFVTPLVVGITMLLATLLI. The Cytoplasmic segment spans residues 124-129; that stretch reads QYERLR. The chain crosses the membrane as a helical span at residues 130-150; the sequence is GVQSSGVLIIFWLLCVICAII. The Extracellular portion of the chain corresponds to 151–170; it reads PFRSKILSALAEGKILDPFR. A helical membrane pass occupies residues 171 to 191; that stretch reads FTTFYIYFALVFCALILSCFK. Residues 192 to 301 are Cytoplasmic-facing; that stretch reads EKPPLFSPEN…KSKQPSFLRA (110 aa). A helical membrane pass occupies residues 302-324; that stretch reads LVRTFTSSLLMSACFNLIQNLLG. The ABC transmembrane type-1 1 domain occupies 310–593; that stretch reads LLMSACFNLI…LPQLISGLTQ (284 aa). At 325-345 the chain is on the extracellular side; it reads FVNPQLLSILIRFISDPTAPT. Residues 346–366 traverse the membrane as a helical segment; it reads WWGFLLAGLMFLSSTMQTLIL. The Cytoplasmic segment spans residues 367 to 419; sequence HQYYHCIFVMALRLRTAIIGVIYRKALVITNSVKRESTVGEMVNLMSVDAQRF. Residues 420 to 440 traverse the membrane as a helical segment; the sequence is MDVSPFINLLWSAPLQVILAI. A topological domain (extracellular) is located at residue Tyr-441. Residues 442–462 traverse the membrane as a helical segment; that stretch reads FLWQILGPSALAGVAVIVLLI. Topologically, residues 463–535 are cytoplasmic; the sequence is PLNGAVSMKM…KGAYLQAIST (73 aa). Residues 536-556 form a helical membrane-spanning segment; it reads FIWICTPFLVTLITLGVYVYV. Topologically, residues 557–567 are extracellular; the sequence is DESNVLDAEKA. The helical transmembrane segment at 568-588 threads the bilayer; that stretch reads FVSLSLFNILKIPLNMLPQLI. Residues 589 to 967 are Cytoplasmic-facing; it reads SGLTQASVSL…YAKSMGLCTT (379 aa). Positions 626-850 constitute an ABC transporter 1 domain; sequence ITIHNGTFTW…DGSFANFLRN (225 aa). 660-667 serves as a coordination point for ATP; that stretch reads GPVGCGKS. Phosphoserine occurs at positions 903 and 906. The span at 903–915 shows a compositional bias: polar residues; the sequence is SSLSSEGEVQNRT. A disordered region spans residues 903 to 923; sequence SSLSSEGEVQNRTMPKKHTNS. An ABC transmembrane type-1 2 domain is found at 967–1248; it reads TLSICLLYGG…MIRMISDLES (282 aa). A helical membrane pass occupies residues 968–988; sequence LSICLLYGGQSAAAIGANVWL. The Extracellular segment spans residues 989–1013; the sequence is SAWSNDAEEHGQQNKTSVRLGVYAA. A glycan (N-linked (GlcNAc...) asparagine) is linked at Asn-1002. The helical transmembrane segment at 1014 to 1034 threads the bilayer; that stretch reads LGILQGLLVMLSAFTMVVGAI. Residues 1035–1071 are Cytoplasmic-facing; sequence QAARLLHEALLHNKIRSPQSFFDTTPSGRILNRFSKD. The helical transmembrane segment at 1072-1092 threads the bilayer; the sequence is IYVIDEVLAPTILMLLNSFFT. Over 1093–1096 the chain is Extracellular; sequence SIST. A helical transmembrane segment spans residues 1097–1117; sequence IMVIVASTPLFMVVVLPLAVL. The Cytoplasmic segment spans residues 1118-1191; that stretch reads YGFVQRFYVA…YPYIASNRWL (74 aa). A helical transmembrane segment spans residues 1192–1212; it reads GVHVEFVGNCVVLFAALFAVI. Over 1213–1219 the chain is Extracellular; sequence GRNSLNP. A helical membrane pass occupies residues 1220-1240; it reads GLVGLSVSYALQVTMALNWMI. Residues 1241–1523 are Cytoplasmic-facing; that stretch reads RMISDLESNI…YGMAKDAGLA (283 aa). An ABC transporter 2 domain is found at 1287-1519; that stretch reads FRNYSVRYRP…GGIFYGMAKD (233 aa). Position 1319 to 1326 (1319 to 1326) interacts with ATP; that stretch reads GRTGAGKS.

The protein belongs to the ABC transporter superfamily. ABCC family. Conjugate transporter (TC 3.A.1.208) subfamily. In terms of tissue distribution, detected throughout the gastrointestinal tract, liver, lung, pancreas, bladder, gall bladder and at low levels in the adrenal gland.

The protein resides in the basolateral cell membrane. It localises to the basal cell membrane. It catalyses the reaction an S-substituted glutathione(in) + ATP + H2O = an S-substituted glutathione(out) + ADP + phosphate + H(+). The catalysed reaction is ATP + H2O + xenobioticSide 1 = ADP + phosphate + xenobioticSide 2.. The enzyme catalyses 17beta-estradiol 17-O-(beta-D-glucuronate)(in) + ATP + H2O = 17beta-estradiol 17-O-(beta-D-glucuronate)(out) + ADP + phosphate + H(+). It carries out the reaction dehydroepiandrosterone 3-sulfate(in) + ATP + H2O = dehydroepiandrosterone 3-sulfate(out) + ADP + phosphate + H(+). It catalyses the reaction leukotriene C4(in) + ATP + H2O = leukotriene C4(out) + ADP + phosphate + H(+). The catalysed reaction is taurocholate(in) + ATP + H2O = taurocholate(out) + ADP + phosphate + H(+). The enzyme catalyses glycocholate(in) + ATP + H2O = glycocholate(out) + ADP + phosphate + H(+). It carries out the reaction taurolithocholate 3-sulfate(in) + ATP + H2O = taurolithocholate 3-sulfate(out) + ADP + phosphate + H(+). It catalyses the reaction taurochenodeoxycholate 3-sulfate(in) + ATP + H2O = taurochenodeoxycholate 3-sulfate(out) + ADP + phosphate + H(+). The catalysed reaction is (4Z,15Z)-bilirubin IXalpha C8-beta-D-glucuronoside(in) + ATP + H2O = (4Z,15Z)-bilirubin IXalpha C8-beta-D-glucuronoside(out) + ADP + phosphate + H(+). The enzyme catalyses (4Z,15Z)-bilirubin IXalpha C8,C12-beta-D-bisglucuronoside(in) + ATP + H2O = (4Z,15Z)-bilirubin IXalpha C8,C12-beta-D-bisglucuronoside(out) + ADP + phosphate + H(+). ATP-dependent transporter of the ATP-binding cassette (ABC) family that binds and hydrolyzes ATP to enable active transport of various substrates including many drugs, toxicants and endogenous compound across cell membranes. Transports glucuronide conjugates such as bilirubin diglucuronide, estradiol-17-beta-o-glucuronide and GSH conjugates such as leukotriene C4 (LTC4). Transports also various bile salts (taurocholate, glycocholate, taurochenodeoxycholate-3-sulfate, taurolithocholate- 3-sulfate). Does not contribute substantially to bile salt physiology but provides an alternative route for the export of bile acids and glucuronides from cholestatic hepatocytes. May contribute to regulate the transport of organic compounds in testes across the blood-testis-barrier. This is ATP-binding cassette sub-family C member 3 (Abcc3) from Mus musculus (Mouse).